Here is a 205-residue protein sequence, read N- to C-terminus: Interleukin-6 (205 aa).

An N-terminal signal peptide occupies residues 1–21 (RFTSAFSLGLLLVTATAFPTP). A disulfide bond links cysteine 64 and cysteine 70. Serine 73 is subject to Phosphoserine. A disulfide bond links cysteine 93 and cysteine 103. Asparagine 164 carries N-linked (GlcNAc...) asparagine glycosylation.

Belongs to the IL-6 superfamily. As to quaternary structure, component of a hexamer of two molecules each of IL6, IL6R and IL6ST; first binds to IL6R to associate with the signaling subunit IL6ST. Interacts with IL6R (via the N-terminal ectodomain); this interaction may be affected by IL6R-binding with SORL1, hence decreasing IL6 cis signaling. Interacts with SORL1 (via the N-terminal ectodomain); this interaction leads to IL6 internalization and lysosomal degradation. May form a trimeric complex with the soluble SORL1 ectodomain and soluble IL6R receptor; this interaction might stabilize circulating IL6, hence promoting IL6 trans signaling.

The protein resides in the secreted. Functionally, cytokine with a wide variety of biological functions in immunity, tissue regeneration, and metabolism. Binds to IL6R, then the complex associates to the signaling subunit IL6ST/gp130 to trigger the intracellular IL6-signaling pathway. The interaction with the membrane-bound IL6R and IL6ST stimulates 'classic signaling', whereas the binding of IL6 and soluble IL6R to IL6ST stimulates 'trans-signaling'. Alternatively, 'cluster signaling' occurs when membrane-bound IL6:IL6R complexes on transmitter cells activate IL6ST receptors on neighboring receiver cells. IL6 is a potent inducer of the acute phase response. Rapid production of IL6 contributes to host defense during infection and tissue injury, but excessive IL6 synthesis is involved in disease pathology. In the innate immune response, is synthesized by myeloid cells, such as macrophages and dendritic cells, upon recognition of pathogens through toll-like receptors (TLRs) at the site of infection or tissue injury. In the adaptive immune response, is required for the differentiation of B cells into immunoglobulin-secreting cells. Plays a major role in the differentiation of CD4(+) T cell subsets. Essential factor for the development of T follicular helper (Tfh) cells that are required for the induction of germinal-center formation. Required to drive naive CD4(+) T cells to the Th17 lineage. Also required for proliferation of myeloma cells and the survival of plasmablast cells. In terms of biological role, acts as an essential factor in bone homeostasis and on vessels directly or indirectly by induction of VEGF, resulting in increased angiogenesis activity and vascular permeability. Induces, through 'trans-signaling' and synergistically with IL1B and TNF, the production of VEGF. Involved in metabolic controls, is discharged into the bloodstream after muscle contraction increasing lipolysis and improving insulin resistance. 'Trans-signaling' in central nervous system also regulates energy and glucose homeostasis. Mediates, through GLP-1, crosstalk between insulin-sensitive tissues, intestinal L cells and pancreatic islets to adapt to changes in insulin demand. Also acts as a myokine. Plays a protective role during liver injury, being required for maintenance of tissue regeneration. Also has a pivotal role in iron metabolism by regulating HAMP/hepcidin expression upon inflammation or bacterial infection. Through activation of IL6ST-YAP-NOTCH pathway, induces inflammation-induced epithelial regeneration. The sequence is that of Interleukin-6 (IL6) from Orcinus orca (Killer whale).